A 160-amino-acid polypeptide reads, in one-letter code: Ureidoglycolate lyase (160 aa).

Belongs to the ureidoglycolate lyase family. Homodimer. The cofactor is Ni(2+).

It catalyses the reaction (S)-ureidoglycolate = urea + glyoxylate. Its pathway is nitrogen metabolism; (S)-allantoin degradation. Catalyzes the catabolism of the allantoin degradation intermediate (S)-ureidoglycolate, generating urea and glyoxylate. Involved in the anaerobic utilization of allantoin as sole nitrogen source. Reinforces the induction of genes involved in the degradation of allantoin and glyoxylate by producing glyoxylate. The protein is Ureidoglycolate lyase of Escherichia coli (strain K12 / MC4100 / BW2952).